We begin with the raw amino-acid sequence, 122 residues long: Large ribosomal subunit protein uL14 (122 aa).

It belongs to the universal ribosomal protein uL14 family. As to quaternary structure, part of the 50S ribosomal subunit. Forms a cluster with proteins L3 and L19. In the 70S ribosome, L14 and L19 interact and together make contacts with the 16S rRNA in bridges B5 and B8.

In terms of biological role, binds to 23S rRNA. Forms part of two intersubunit bridges in the 70S ribosome. The protein is Large ribosomal subunit protein uL14 of Christiangramia forsetii (strain DSM 17595 / CGMCC 1.15422 / KT0803) (Gramella forsetii).